The sequence spans 303 residues: ATP phosphoribosyltransferase (303 aa).

This sequence belongs to the ATP phosphoribosyltransferase family. Long subfamily. Requires Mg(2+) as cofactor.

It is found in the cytoplasm. It catalyses the reaction 1-(5-phospho-beta-D-ribosyl)-ATP + diphosphate = 5-phospho-alpha-D-ribose 1-diphosphate + ATP. Its pathway is amino-acid biosynthesis; L-histidine biosynthesis; L-histidine from 5-phospho-alpha-D-ribose 1-diphosphate: step 1/9. Its activity is regulated as follows. Feedback inhibited by histidine. Catalyzes the condensation of ATP and 5-phosphoribose 1-diphosphate to form N'-(5'-phosphoribosyl)-ATP (PR-ATP). Has a crucial role in the pathway because the rate of histidine biosynthesis seems to be controlled primarily by regulation of HisG enzymatic activity. In Haemophilus influenzae (strain PittEE), this protein is ATP phosphoribosyltransferase.